Here is a 134-residue protein sequence, read N- to C-terminus: Replication enhancer protein (134 aa).

The protein belongs to the geminiviridae replication enhancer protein family. Homooligomer. Interacts with the replication-associated protein (REP). Interacts with host proliferating cell nuclear antigen (PCNA). Interacts with host retinoblastoma-related protein 1 (RBR1), and may thereby deregulate the host cell cycle. Oligomerization and interaction with PCNA are necessary for optimal replication enhancement.

In terms of biological role, increases viral DNA accumulation. Enhances infectivity and symptom expression. The chain is Replication enhancer protein from Tomato yellow leaf curl Sardinia virus (TYLCSV).